The following is a 135-amino-acid chain: Transcription antitermination protein NusB (135 aa).

The protein belongs to the NusB family.

Its function is as follows. Involved in transcription antitermination. Required for transcription of ribosomal RNA (rRNA) genes. Binds specifically to the boxA antiterminator sequence of the ribosomal RNA (rrn) operons. This Lacticaseibacillus paracasei (strain ATCC 334 / BCRC 17002 / CCUG 31169 / CIP 107868 / KCTC 3260 / NRRL B-441) (Lactobacillus paracasei) protein is Transcription antitermination protein NusB.